The following is a 127-amino-acid chain: Large ribosomal subunit protein uL22 (127 aa).

The protein belongs to the universal ribosomal protein uL22 family. Part of the 50S ribosomal subunit.

This protein binds specifically to 23S rRNA; its binding is stimulated by other ribosomal proteins, e.g. L4, L17, and L20. It is important during the early stages of 50S assembly. It makes multiple contacts with different domains of the 23S rRNA in the assembled 50S subunit and ribosome. Functionally, the globular domain of the protein is located near the polypeptide exit tunnel on the outside of the subunit, while an extended beta-hairpin is found that lines the wall of the exit tunnel in the center of the 70S ribosome. This is Large ribosomal subunit protein uL22 from Brucella suis (strain ATCC 23445 / NCTC 10510).